A 114-amino-acid polypeptide reads, in one-letter code: UPF0342 protein LVIS_1488 (114 aa).

The protein belongs to the UPF0342 family.

In Levilactobacillus brevis (strain ATCC 367 / BCRC 12310 / CIP 105137 / JCM 1170 / LMG 11437 / NCIMB 947 / NCTC 947) (Lactobacillus brevis), this protein is UPF0342 protein LVIS_1488.